Here is a 226-residue protein sequence, read N- to C-terminus: Probable endonuclease LCL3 (226 aa).

The helical transmembrane segment at 15–32 (VFYTSILTGGILSSFYVY) threads the bilayer. The region spanning 53–212 (RTLFGRVTSV…RKKKIGMFQQ (160 aa)) is the TNase-like domain. Arginine 103 is an active-site residue. Aspartate 108 contributes to the Ca(2+) binding site. Residues glutamate 111 and arginine 151 contribute to the active site.

Belongs to the LCL3 family.

It is found in the mitochondrion. The protein localises to the membrane. The protein is Probable endonuclease LCL3 (LCL3) of Yarrowia lipolytica (strain CLIB 122 / E 150) (Yeast).